The sequence spans 210 residues: Probable nicotinate-nucleotide adenylyltransferase (210 aa).

This sequence belongs to the NadD family.

The catalysed reaction is nicotinate beta-D-ribonucleotide + ATP + H(+) = deamido-NAD(+) + diphosphate. The protein operates within cofactor biosynthesis; NAD(+) biosynthesis; deamido-NAD(+) from nicotinate D-ribonucleotide: step 1/1. Its function is as follows. Catalyzes the reversible adenylation of nicotinate mononucleotide (NaMN) to nicotinic acid adenine dinucleotide (NaAD). This is Probable nicotinate-nucleotide adenylyltransferase from Streptococcus pyogenes serotype M1.